The sequence spans 435 residues: Methylenetetrahydrofolate--tRNA-(uracil-5-)-methyltransferase TrmFO (435 aa).

9 to 14 lines the FAD pocket; that stretch reads GAGLAG.

This sequence belongs to the MnmG family. TrmFO subfamily. Requires FAD as cofactor.

The protein resides in the cytoplasm. The enzyme catalyses uridine(54) in tRNA + (6R)-5,10-methylene-5,6,7,8-tetrahydrofolate + NADH + H(+) = 5-methyluridine(54) in tRNA + (6S)-5,6,7,8-tetrahydrofolate + NAD(+). It carries out the reaction uridine(54) in tRNA + (6R)-5,10-methylene-5,6,7,8-tetrahydrofolate + NADPH + H(+) = 5-methyluridine(54) in tRNA + (6S)-5,6,7,8-tetrahydrofolate + NADP(+). Its function is as follows. Catalyzes the folate-dependent formation of 5-methyl-uridine at position 54 (M-5-U54) in all tRNAs. This Staphylococcus haemolyticus (strain JCSC1435) protein is Methylenetetrahydrofolate--tRNA-(uracil-5-)-methyltransferase TrmFO.